The following is a 195-amino-acid chain: Ribosome maturation factor RimM (195 aa).

One can recognise a PRC barrel domain in the interval 101-191; the sequence is ADEWYPKDLI…YLTLDPPGGL (91 aa).

Belongs to the RimM family. Binds ribosomal protein uS19.

Its subcellular location is the cytoplasm. An accessory protein needed during the final step in the assembly of 30S ribosomal subunit, possibly for assembly of the head region. Essential for efficient processing of 16S rRNA. May be needed both before and after RbfA during the maturation of 16S rRNA. It has affinity for free ribosomal 30S subunits but not for 70S ribosomes. This Bifidobacterium adolescentis (strain ATCC 15703 / DSM 20083 / NCTC 11814 / E194a) protein is Ribosome maturation factor RimM.